The sequence spans 214 residues: Octanoyltransferase (214 aa).

The BPL/LPL catalytic domain occupies 29-214 (STTPDEIWIL…EHLQKQLMPT (186 aa)). Substrate contacts are provided by residues 69-76 (RGGEITYH), 146-148 (ALG), and 159-161 (GLA). The Acyl-thioester intermediate role is filled by Cys177.

The protein belongs to the LipB family.

The protein localises to the cytoplasm. The catalysed reaction is octanoyl-[ACP] + L-lysyl-[protein] = N(6)-octanoyl-L-lysyl-[protein] + holo-[ACP] + H(+). It functions in the pathway protein modification; protein lipoylation via endogenous pathway; protein N(6)-(lipoyl)lysine from octanoyl-[acyl-carrier-protein]: step 1/2. Functionally, catalyzes the transfer of endogenously produced octanoic acid from octanoyl-acyl-carrier-protein onto the lipoyl domains of lipoate-dependent enzymes. Lipoyl-ACP can also act as a substrate although octanoyl-ACP is likely to be the physiological substrate. The chain is Octanoyltransferase from Polynucleobacter asymbioticus (strain DSM 18221 / CIP 109841 / QLW-P1DMWA-1) (Polynucleobacter necessarius subsp. asymbioticus).